The chain runs to 183 residues: ATP synthase subunit b, chloroplastic (183 aa).

Residues 25-45 (DILATNLINLTVVVGVLIFFG) form a helical membrane-spanning segment.

This sequence belongs to the ATPase B chain family. F-type ATPases have 2 components, F(1) - the catalytic core - and F(0) - the membrane proton channel. F(1) has five subunits: alpha(3), beta(3), gamma(1), delta(1), epsilon(1). F(0) has four main subunits: a(1), b(1), b'(1) and c(10-14). The alpha and beta chains form an alternating ring which encloses part of the gamma chain. F(1) is attached to F(0) by a central stalk formed by the gamma and epsilon chains, while a peripheral stalk is formed by the delta, b and b' chains.

It is found in the plastid. It localises to the chloroplast thylakoid membrane. F(1)F(0) ATP synthase produces ATP from ADP in the presence of a proton or sodium gradient. F-type ATPases consist of two structural domains, F(1) containing the extramembraneous catalytic core and F(0) containing the membrane proton channel, linked together by a central stalk and a peripheral stalk. During catalysis, ATP synthesis in the catalytic domain of F(1) is coupled via a rotary mechanism of the central stalk subunits to proton translocation. Its function is as follows. Component of the F(0) channel, it forms part of the peripheral stalk, linking F(1) to F(0). The sequence is that of ATP synthase subunit b, chloroplastic from Sorghum bicolor (Sorghum).